The primary structure comprises 320 residues: Ferrochelatase (320 aa).

His-194 and Glu-275 together coordinate Fe cation.

The protein belongs to the ferrochelatase family.

The protein localises to the cytoplasm. The catalysed reaction is heme b + 2 H(+) = protoporphyrin IX + Fe(2+). It participates in porphyrin-containing compound metabolism; protoheme biosynthesis; protoheme from protoporphyrin-IX: step 1/1. Its function is as follows. Catalyzes the ferrous insertion into protoporphyrin IX. In Klebsiella pneumoniae (strain 342), this protein is Ferrochelatase.